The chain runs to 384 residues: Xylose repressor (384 aa).

The segment at residues 29 to 48 is a DNA-binding region (H-T-H motif); sequence RAKLSEMTGLNKSTVSSQVN.

This sequence belongs to the ROK (NagC/XylR) family.

Functionally, transcriptional repressor of xylose-utilizing enzymes. The sequence is that of Xylose repressor (xylR) from Bacillus spizizenii (strain ATCC 23059 / NRRL B-14472 / W23) (Bacillus subtilis subsp. spizizenii).